We begin with the raw amino-acid sequence, 286 residues long: Lipid phosphate phosphatase epsilon 2, chloroplastic (286 aa).

The transit peptide at 1–60 (MAASSSSLLLLHKPTYNFHFAASSVPTYINSARFRISSSIFPLDRRRRRRIWSVSGFKSM) directs the protein to the chloroplast. Transmembrane regions (helical) follow at residues 133–149 (LWAV…SVAL), 173–193 (AQSI…WLGT), 194–214 (NVLS…FTWL), 226–246 (VVVG…TWNS), and 260–280 (IALF…VLLN).

It belongs to the PA-phosphatase related phosphoesterase family. As to expression, expressed in root tips, root branch points, cotyledons and leaves.

The protein localises to the plastid. It localises to the chloroplast inner membrane. With respect to regulation, inhibited by Mg(2+). Functionally, exhibits phosphatidate phosphatase (PAP) activity in vitro. May play a secondary role as PAP in plastids. This Arabidopsis thaliana (Mouse-ear cress) protein is Lipid phosphate phosphatase epsilon 2, chloroplastic (LPPE2).